The primary structure comprises 113 residues: uncharacterized protein (113 aa).

Residues Y78–E113 form a disordered region.

This is an uncharacterized protein from Halobacterium phage phiH (Bacteriophage phi-H).